The sequence spans 536 residues: Phosphoenolpyruvate carboxykinase (ATP) (536 aa).

3 residues coordinate substrate: R61, Y195, and K201. ATP-binding positions include K201, H220, and 236–244 (GLSGTGKTT). Positions 201 and 220 each coordinate Mn(2+). Residue D257 participates in Mn(2+) binding. Positions 285, 323, and 448 each coordinate ATP. R323 is a substrate binding site.

Belongs to the phosphoenolpyruvate carboxykinase (ATP) family. Mn(2+) is required as a cofactor.

It localises to the cytoplasm. The enzyme catalyses oxaloacetate + ATP = phosphoenolpyruvate + ADP + CO2. The protein operates within carbohydrate biosynthesis; gluconeogenesis. Its function is as follows. Involved in the gluconeogenesis. Catalyzes the conversion of oxaloacetate (OAA) to phosphoenolpyruvate (PEP) through direct phosphoryl transfer between the nucleoside triphosphate and OAA. The chain is Phosphoenolpyruvate carboxykinase (ATP) from Methylobacterium sp. (strain 4-46).